The chain runs to 286 residues: Bifunctional protein FolD 2 (286 aa).

NADP(+)-binding positions include 165–167 (GRG), Thr192, and Ile233.

It belongs to the tetrahydrofolate dehydrogenase/cyclohydrolase family. Homodimer.

The catalysed reaction is (6R)-5,10-methylene-5,6,7,8-tetrahydrofolate + NADP(+) = (6R)-5,10-methenyltetrahydrofolate + NADPH. The enzyme catalyses (6R)-5,10-methenyltetrahydrofolate + H2O = (6R)-10-formyltetrahydrofolate + H(+). It functions in the pathway one-carbon metabolism; tetrahydrofolate interconversion. Functionally, catalyzes the oxidation of 5,10-methylenetetrahydrofolate to 5,10-methenyltetrahydrofolate and then the hydrolysis of 5,10-methenyltetrahydrofolate to 10-formyltetrahydrofolate. The sequence is that of Bifunctional protein FolD 2 from Salinispora tropica (strain ATCC BAA-916 / DSM 44818 / JCM 13857 / NBRC 105044 / CNB-440).